Here is a 321-residue protein sequence, read N- to C-terminus: Peptidase 1 (321 aa).

The signal sequence occupies residues 1 to 18 (MKFVLAIASLLVLSTVYA). A propeptide spans 19–98 (RPASIKTFEE…LKTQFDLNAE (80 aa)) (activation peptide). Intrachain disulfides connect Cys-102/Cys-216, Cys-130/Cys-170, and Cys-164/Cys-202. Cys-133 is a catalytic residue. The N-linked (GlcNAc...) asparagine glycan is linked to Asn-151. Catalysis depends on residues His-269 and Arg-288.

The protein belongs to the peptidase C1 family. In terms of assembly, monomer.

The protein resides in the secreted. The enzyme catalyses Broad endopeptidase specificity.. Functionally, thiol protease that hydrolyzes proteins, with a preference for Phe or basic residues. The protein is Peptidase 1 (DERF1) of Dermatophagoides farinae (American house dust mite).